Here is a 393-residue protein sequence, read N- to C-terminus: Lipid-A-disaccharide synthase (393 aa).

It belongs to the LpxB family.

It carries out the reaction a lipid X + a UDP-2-N,3-O-bis[(3R)-3-hydroxyacyl]-alpha-D-glucosamine = a lipid A disaccharide + UDP + H(+). It functions in the pathway bacterial outer membrane biogenesis; LPS lipid A biosynthesis. Its function is as follows. Condensation of UDP-2,3-diacylglucosamine and 2,3-diacylglucosamine-1-phosphate to form lipid A disaccharide, a precursor of lipid A, a phosphorylated glycolipid that anchors the lipopolysaccharide to the outer membrane of the cell. The polypeptide is Lipid-A-disaccharide synthase (Actinobacillus pleuropneumoniae serotype 3 (strain JL03)).